We begin with the raw amino-acid sequence, 690 residues long: eEF1A lysine and N-terminal methyltransferase (690 aa).

Residues 427–451 (AAASSASKKKNKKKAKQPASTGAKD) are disordered. Residues 433–442 (SKKKNKKKAK) are compositionally biased toward basic residues.

It belongs to the methyltransferase superfamily.

The enzyme catalyses L-lysyl-[protein] + S-adenosyl-L-methionine = N(6)-methyl-L-lysyl-[protein] + S-adenosyl-L-homocysteine + H(+). It carries out the reaction N(6)-methyl-L-lysyl-[protein] + S-adenosyl-L-methionine = N(6),N(6)-dimethyl-L-lysyl-[protein] + S-adenosyl-L-homocysteine + H(+). The catalysed reaction is N-terminal glycyl-L-lysyl-L-glutamyl-[protein] + 3 S-adenosyl-L-methionine = N-terminal N,N,N-trimethyl-glycyl-L-lysyl-L-glutamyl-[protein] + 3 S-adenosyl-L-homocysteine + 3 H(+). In terms of biological role, dual methyltransferase that catalyzes methylation of elongation factor 1-alpha (eef1a1 and eef1a2) at two different positions, and is therefore involved in the regulation of mRNA translation. Via its C-terminus, methylates the N-terminus of eef1a1 and eef1a2. Via its N-terminus dimethylates lysine residues of eef1a1 and eef1a2. This chain is eEF1A lysine and N-terminal methyltransferase (mettl13), found in Danio rerio (Zebrafish).